Consider the following 42-residue polypeptide: MSNVGTTGRIPLWIIGTLAGTLVIGLLAIFFYGSYVGLGSSL.

The helical transmembrane segment at 10–30 threads the bilayer; the sequence is IPLWIIGTLAGTLVIGLLAIF.

It belongs to the PsbJ family. As to quaternary structure, PSII is composed of 1 copy each of membrane proteins PsbA, PsbB, PsbC, PsbD, PsbE, PsbF, PsbH, PsbI, PsbJ, PsbK, PsbL, PsbM, PsbT, PsbX, PsbY, PsbZ, Psb30/Ycf12, at least 3 peripheral proteins of the oxygen-evolving complex and a large number of cofactors. It forms dimeric complexes.

The protein resides in the plastid. It is found in the chloroplast thylakoid membrane. Functionally, one of the components of the core complex of photosystem II (PSII). PSII is a light-driven water:plastoquinone oxidoreductase that uses light energy to abstract electrons from H(2)O, generating O(2) and a proton gradient subsequently used for ATP formation. It consists of a core antenna complex that captures photons, and an electron transfer chain that converts photonic excitation into a charge separation. In Chaetosphaeridium globosum (Charophycean green alga), this protein is Photosystem II reaction center protein J.